Reading from the N-terminus, the 465-residue chain is A-type ATP synthase subunit B (465 aa).

Belongs to the ATPase alpha/beta chains family. As to quaternary structure, the A-type ATPase is composed of subunits A(3), B(3), C, D, E(1 or 2), F, H(2), I and proteolipid K(x).

Its subcellular location is the cell membrane. Its function is as follows. Component of the A-type ATP synthase that produces ATP from ADP in the presence of a proton gradient across the membrane. The B chain is a regulatory subunit. This chain is A-type ATP synthase subunit B, found in Methanocaldococcus jannaschii (strain ATCC 43067 / DSM 2661 / JAL-1 / JCM 10045 / NBRC 100440) (Methanococcus jannaschii).